The chain runs to 234 residues: Ribosomal RNA large subunit methyltransferase E (234 aa).

The disordered stretch occupies residues 1-37 (MSDDDRRRWKGPGPERQDSGRRSTERKVIARNARTES). The S-adenosyl-L-methionine site is built by glycine 91, tryptophan 93, aspartate 109, aspartate 125, and aspartate 149. Lysine 189 serves as the catalytic Proton acceptor.

Belongs to the class I-like SAM-binding methyltransferase superfamily. RNA methyltransferase RlmE family.

It localises to the cytoplasm. It catalyses the reaction uridine(2552) in 23S rRNA + S-adenosyl-L-methionine = 2'-O-methyluridine(2552) in 23S rRNA + S-adenosyl-L-homocysteine + H(+). Functionally, specifically methylates the uridine in position 2552 of 23S rRNA at the 2'-O position of the ribose in the fully assembled 50S ribosomal subunit. The sequence is that of Ribosomal RNA large subunit methyltransferase E from Hyphomonas neptunium (strain ATCC 15444).